The sequence spans 763 residues: Hormone-sensitive lipase (763 aa).

An Involved in the stabilization of the negatively charged intermediate by the formation of the oxyanion hole motif is present at residues 350 to 352 (HGG). S424 is a catalytic residue. S552 carries the post-translational modification Phosphoserine. S554 is subject to Phosphoserine; by AMPK. Phosphoserine occurs at positions 595, 627, and 649. Residues 616-627 (AREEAEAKEGLS) show a composition bias toward basic and acidic residues. The disordered stretch occupies residues 616–652 (AREEAEAKEGLSAKDGSSRVSNAFPEGFHPRRTSQGA). Catalysis depends on residues D692 and H722.

It belongs to the 'GDXG' lipolytic enzyme family. In terms of assembly, monomer and homodimer. Interacts with CAVIN1 in the adipocyte cytoplasm. Interacts with PLIN5. In terms of processing, phosphorylation by AMPK reduces its translocation towards the lipid droplets.

The protein resides in the cell membrane. Its subcellular location is the membrane. It localises to the caveola. It is found in the cytoplasm. The protein localises to the cytosol. The protein resides in the lipid droplet. The enzyme catalyses a diacylglycerol + H2O = a monoacylglycerol + a fatty acid + H(+). It catalyses the reaction a triacylglycerol + H2O = a diacylglycerol + a fatty acid + H(+). It carries out the reaction a monoacylglycerol + H2O = glycerol + a fatty acid + H(+). The catalysed reaction is Hydrolyzes glycerol monoesters of long-chain fatty acids.. The enzyme catalyses 1,2-di-(9Z-octadecenoyl)-glycerol + (9Z)-octadecenoate + H(+) = 1,2,3-tri-(9Z-octadecenoyl)-glycerol + H2O. It catalyses the reaction 2,3-di-(9Z)-octadecenoyl-sn-glycerol + H2O = 2-(9Z-octadecenoyl)-glycerol + (9Z)-octadecenoate + H(+). It carries out the reaction cholesteryl (9Z-octadecenoate) + H2O = cholesterol + (9Z)-octadecenoate + H(+). The catalysed reaction is 1,2,3-tri-(9Z-octadecenoyl)-glycerol + H2O = di-(9Z)-octadecenoylglycerol + (9Z)-octadecenoate + H(+). The enzyme catalyses all-trans-retinyl hexadecanoate + H2O = all-trans-retinol + hexadecanoate + H(+). It catalyses the reaction 1,2-di-(9Z-octadecenoyl)-glycerol + H2O = (9Z-octadecenoyl)-glycerol + (9Z)-octadecenoate + H(+). It carries out the reaction 2-(5Z,8Z,11Z,14Z-eicosatetraenoyl)-glycerol + H2O = glycerol + (5Z,8Z,11Z,14Z)-eicosatetraenoate + H(+). The catalysed reaction is 1-(9Z-octadecenoyl)-glycerol + H2O = glycerol + (9Z)-octadecenoate + H(+). The enzyme catalyses 2-(9Z-octadecenoyl)-glycerol + H2O = glycerol + (9Z)-octadecenoate + H(+). It catalyses the reaction 1-O-hexadecyl-2-acetyl-sn-glycerol + H2O = 1-O-hexadecyl-sn-glycerol + acetate + H(+). It carries out the reaction 1,2-di-(9Z-octadecenoyl)-sn-glycerol + H2O = (9Z-octadecenoyl)-glycerol + (9Z)-octadecenoate + H(+). The catalysed reaction is 1,3-di-(9Z-octadecenoyl)-glycerol + H2O = 1-(9Z-octadecenoyl)-glycerol + (9Z)-octadecenoate + H(+). The enzyme catalyses 1,2-di-(9Z-octadecenoyl)-glycerol + H2O = 2-(9Z-octadecenoyl)-glycerol + (9Z)-octadecenoate + H(+). It participates in glycerolipid metabolism; triacylglycerol degradation. In terms of biological role, lipase with broad substrate specificity, catalyzing the hydrolysis of triacylglycerols (TAGs), diacylglycerols (DAGs), monoacylglycerols (MAGs), cholesteryl esters and retinyl esters. Shows a preferential hydrolysis of DAGs over TAGs and MAGs. Preferentially hydrolyzes fatty acid (FA) esters at the sn-3 position of the glycerol backbone in DAGs and FA esters at the sn-1 and sn-2 positions of the glycerol backbone in TAGs. Catalyzes the hydrolysis of 2-arachidonoylglycerol, an endocannabinoid and of 2-acetyl monoalkylglycerol ether, the penultimate precursor of the pathway for de novo synthesis of platelet-activating factor. In adipose tissue and heart, it primarily hydrolyzes stored triglycerides to free fatty acids, while in steroidogenic tissues, it principally converts cholesteryl esters to free cholesterol for steroid hormone production. This Ictidomys tridecemlineatus (Thirteen-lined ground squirrel) protein is Hormone-sensitive lipase (LIPE).